The primary structure comprises 249 residues: Triosephosphate isomerase (249 aa).

Asn12 and Lys14 together coordinate substrate. Lys14 is modified (N6-acetyllysine). 3'-nitrotyrosine is present on Tyr68. Position 80 is a phosphoserine (Ser80). His96 functions as the Electrophile in the catalytic mechanism. Ser106 bears the Phosphoserine mark. Residue Lys142 forms a Glycyl lysine isopeptide (Lys-Gly) (interchain with G-Cter in SUMO1) linkage. An N6-succinyllysine modification is found at Lys149. Residue Lys156 is modified to N6-acetyllysine; alternate. N6-succinyllysine; alternate is present on Lys156. The residue at position 159 (Ser159) is a Phosphoserine. Glu166 (proton acceptor) is an active-site residue. Thr173 carries the phosphothreonine modification. Lys194 is modified (N6-acetyllysine; alternate). The residue at position 194 (Lys194) is an N6-succinyllysine; alternate. Residue Lys194 is modified to N6-methyllysine; alternate. A Phosphoserine modification is found at Ser198. At Tyr209 the chain carries 3'-nitrotyrosine. Phosphoserine is present on Ser212. A Phosphothreonine modification is found at Thr214. Ser223 is subject to Phosphoserine. Lys238 carries the N6-acetyllysine modification.

This sequence belongs to the triosephosphate isomerase family. In terms of assembly, homodimer.

The protein resides in the cytoplasm. It catalyses the reaction dihydroxyacetone phosphate = methylglyoxal + phosphate. The catalysed reaction is D-glyceraldehyde 3-phosphate = dihydroxyacetone phosphate. It participates in carbohydrate degradation; glycolysis; D-glyceraldehyde 3-phosphate from glycerone phosphate: step 1/1. The protein operates within carbohydrate biosynthesis; gluconeogenesis. Functionally, triosephosphate isomerase is an extremely efficient metabolic enzyme that catalyzes the interconversion between dihydroxyacetone phosphate (DHAP) and D-glyceraldehyde-3-phosphate (G3P) in glycolysis and gluconeogenesis. In terms of biological role, it is also responsible for the non-negligible production of methylglyoxal a reactive cytotoxic side-product that modifies and can alter proteins, DNA and lipids. The protein is Triosephosphate isomerase (TPI1) of Canis lupus familiaris (Dog).